We begin with the raw amino-acid sequence, 443 residues long: ATP-dependent protease ATPase subunit HslU (443 aa).

Residues I18, 60 to 65 (GVGKTE), D256, E321, and R393 contribute to the ATP site.

The protein belongs to the ClpX chaperone family. HslU subfamily. A double ring-shaped homohexamer of HslV is capped on each side by a ring-shaped HslU homohexamer. The assembly of the HslU/HslV complex is dependent on binding of ATP.

It localises to the cytoplasm. Its function is as follows. ATPase subunit of a proteasome-like degradation complex; this subunit has chaperone activity. The binding of ATP and its subsequent hydrolysis by HslU are essential for unfolding of protein substrates subsequently hydrolyzed by HslV. HslU recognizes the N-terminal part of its protein substrates and unfolds these before they are guided to HslV for hydrolysis. This chain is ATP-dependent protease ATPase subunit HslU, found in Tolumonas auensis (strain DSM 9187 / NBRC 110442 / TA 4).